Reading from the N-terminus, the 609-residue chain is Zinc metalloproteinase-disintegrin-like VAP2B (609 aa).

The first 20 residues, 1 to 20 (MIQVLLVTICLAAFPYQGSS), serve as a signal peptide directing secretion. A propeptide spanning residues 21–189 (IILESGNVND…KKASQLVVTA (169 aa)) is cleaved from the precursor. Glu190 carries the pyrrolidone carboxylic acid (Glu) modification. The 196-residue stretch at 198–393 (RFVELFLVVD…HNPECILNEP (196 aa)) folds into the Peptidase M12B domain. Ca(2+)-binding residues include Glu201 and Asp285. 3 disulfides stabilise this stretch: Cys308–Cys388, Cys348–Cys372, and Cys350–Cys355. His333 contacts Zn(2+). Glu334 is an active-site residue. The Zn(2+) site is built by His337 and His343. A glycan (N-linked (GlcNAc...) asparagine) is linked at Asn371. 8 residues coordinate Ca(2+): Cys388, Asn391, Val403, Asn406, Leu408, Glu410, Glu413, and Asp416. One can recognise a Disintegrin domain in the interval 401–487 (PPVCGNELLE…ECPADVFHKN (87 aa)). 22 disulfides stabilise this stretch: Cys404–Cys423, Cys404–Cys433, Cys415–Cys428, Cys415–Cys433, Cys417–Cys423, Cys427–Cys450, Cys441–Cys447, Cys446–Cys472, Cys459–Cys479, Cys466–Cys491, Cys466–Cys498, Cys491–Cys503, Cys498–Cys503, Cys510–Cys525, Cys510–Cys560, Cys525–Cys571, Cys538–Cys548, Cys548–Cys555, Cys555–Cys597, Cys560–Cys571, Cys591–Cys602, and Cys597–Cys602. Positions 459-472 (CRASMSECDPAEHC) are inhibits platelet aggregation. A D/ECD-tripeptide motif is present at residues 465–467 (ECD). Residues Asp467, Pro468, Glu470, Asp482, and Val483 each coordinate Ca(2+).

Belongs to the venom metalloproteinase (M12B) family. P-III subfamily. P-IIIb sub-subfamily. In terms of assembly, monomer or heterodimer; non-covalently linked. Interacts with fibrillar collagen. The cofactor is Zn(2+). Post-translationally, the N-terminus is blocked. As to expression, expressed by the venom gland.

The protein localises to the secreted. In terms of biological role, zinc metalloprotease that abolishes platelet aggregation induced by collagen, but has no effect on platelet aggregation induced by ADP or thromboxane analog. This inhibition may be due to its ability to bind collagen and block the binding site on collagen for platelets and/or to its ability to bind to the platelet alpha-2/beta-1 collagen receptor (ITGA2/ITGB1) to block its interaction with collagen and hence prevent platelet stimulation. Its function is as follows. Abolishes platelet aggregation induced by collagen (IC(50)=66 nM) but not ADP-stimulated platelet aggregation. This inhibition may be due to its ability to bind collagen and block the binding site on collagen for platelets and/or to its ability to bind to the platelet alpha-2/beta-1 collagen receptor (ITGA2/ITGB1) to block its interaction with collagen and hence prevent platelet stimulation. The polypeptide is Zinc metalloproteinase-disintegrin-like VAP2B (Crotalus atrox (Western diamondback rattlesnake)).